The sequence spans 273 residues: Flagellin FljK (273 aa).

Belongs to the bacterial flagellin family. In terms of assembly, in C.crescentus, the flagellar filament is composed of multiple flagellins of 29 kDa; 27 kDa and 25 kDa.

The protein resides in the secreted. It is found in the bacterial flagellum. In terms of biological role, flagellin is the subunit protein which polymerizes to form the filaments of bacterial flagella. This Caulobacter vibrioides (strain ATCC 19089 / CIP 103742 / CB 15) (Caulobacter crescentus) protein is Flagellin FljK (fljK).